Here is a 340-residue protein sequence, read N- to C-terminus: Glycerol-3-phosphate dehydrogenase [NAD(P)+] (340 aa).

S11, W12, R33, and K106 together coordinate NADPH. 3 residues coordinate sn-glycerol 3-phosphate: K106, G137, and S139. A141 contacts NADPH. Residues K192, D245, S255, R256, and N257 each contribute to the sn-glycerol 3-phosphate site. The active-site Proton acceptor is the K192. NADPH is bound at residue R256. Residues V280 and E282 each coordinate NADPH.

This sequence belongs to the NAD-dependent glycerol-3-phosphate dehydrogenase family.

It is found in the cytoplasm. The catalysed reaction is sn-glycerol 3-phosphate + NAD(+) = dihydroxyacetone phosphate + NADH + H(+). It carries out the reaction sn-glycerol 3-phosphate + NADP(+) = dihydroxyacetone phosphate + NADPH + H(+). It functions in the pathway membrane lipid metabolism; glycerophospholipid metabolism. In terms of biological role, catalyzes the reduction of the glycolytic intermediate dihydroxyacetone phosphate (DHAP) to sn-glycerol 3-phosphate (G3P), the key precursor for phospholipid synthesis. This is Glycerol-3-phosphate dehydrogenase [NAD(P)+] from Bacillus cereus (strain G9842).